The sequence spans 926 residues: MLQVHRTGLGRLGVSLSKGLHHKAVLAVRREDVNAWERRAPLAPKHIKGITNLGYKVLIQPSNRRAIHDKDYVKAGGILQEDISEACLILGVKRPPEEKLMSRKTYAFFSHTIKAQEANMGLLDEILKQEIRLIDYEKMVDHRGVRVVAFGQWAGVAGMINILHGMGLRLLALGHHTPFMHIGMAHNYRNSSQAVQAVRDAGYEISLGLMPKSIGPLTFVFTGTGNVSKGAQAIFNELPCEYVEPHELKEVSQTGDLRKVYGTVLSRHHHLVRKTDAVYDPAEYDKHPERYISRFNTDIAPYTTCLINGIYWEQNTPRLLTRQDAQSLLAPGKFSPAGVEGCPALPHKLVAICDISADTGGSIEFMTECTTIEHPFCMYDADQHIIHDSVEGSGILMCSIDNLPAQLPIEATECFGDMLYPYVEEMILSDATQPLESQNFSPVVRDAVITSNGTLPDKYKYIQTLRESRERAQSLSMGTRRKVLVLGSGYISEPVLEYLSRDGNIEITVGSDMKNQIEQLGKKYNINPVSMDICKQEEKLGFLVAKQDLVISLLPYVLHPLVAKACITNKVNMVTASYITPALKELEKSVEDAGITIIGELGLDPGLDHMLAMETIDKAKEVGATIESYISYCGGLPAPEHSNNPLRYKFSWSPVGVLMNVMQSATYLLDGKVVNVAGGISFLDAVTSMDFFPGLNLEGYPNRDSTKYAEIYGISSAHTLLRGTLRYKGYMKALNGFVKLGLINREALPAFRPEANPLTWKQLLCDLVGISPSSEHDVLKEAVLKKLGGDNTQLEAAEWLGLLGDEQVPQAESILDALSKHLVMKLSYGPEEKDMIVMRDSFGIRHPSGHLEHKTIDLVAYGDINGFSAMAKTVGLPTAMAAKMLLDGEIGAKGLMGPFSKEIYGPILERIKAEGIIYTTQSTIKP.

The N-terminal 27 residues, Met1–Ala27, are a transit peptide targeting the mitochondrion. A lysine-ketoglutarate reductase region spans residues Val28–Ser476. Lys48 and Lys56 each carry N6-acetyllysine. Lys93 bears the N6-acetyllysine; alternate mark. Residue Lys93 is modified to N6-succinyllysine; alternate. Residue Lys128 is modified to N6-acetyllysine. N6-acetyllysine; alternate is present on Lys138. Lys138 is subject to N6-succinyllysine; alternate. Lys274 is modified (N6-succinyllysine). Lys286 is modified (N6-acetyllysine; alternate). An N6-succinyllysine; alternate modification is found at Lys286. Lys333 is subject to N6-succinyllysine. Lys458 is modified (N6-acetyllysine; alternate). An N6-succinyllysine; alternate modification is found at Lys458. The interval Met477–Pro926 is saccharopine dehydrogenase. 3 residues coordinate NAD(+): Ser488, Asp512, and Gln516. Residue Lys523 is modified to N6-acetyllysine; alternate. Lys523 bears the N6-succinyllysine; alternate mark. Ile533 provides a ligand contact to NAD(+). Lys535 is subject to N6-acetyllysine; alternate. At Lys535 the chain carries N6-succinyllysine; alternate. Leu554, Ala576, and Ser577 together coordinate NAD(+). Ser577–Tyr578 is a binding site for L-saccharopine. Position 584 is an N6-acetyllysine; alternate (Lys584). An N6-succinyllysine; alternate modification is found at Lys584. Leu603, Asp604, and Pro605 together coordinate NAD(+). Asp604 lines the L-saccharopine pocket. Arg703 contributes to the L-saccharopine binding site. An N6-acetyllysine modification is found at Lys707. Position 724 to 726 (Thr724 to Arg726) interacts with L-saccharopine. Lys732 is modified (N6-succinyllysine). Lys739 carries the N6-acetyllysine modification. Residue Lys761 is modified to N6-acetyllysine; alternate. Lys761 carries the post-translational modification N6-succinyllysine; alternate. Lys780 is subject to N6-acetyllysine.

The protein in the N-terminal section; belongs to the AlaDH/PNT family. It in the C-terminal section; belongs to the saccharopine dehydrogenase family. Homotetramer. Expressed in all 16 tissues examined with highest expression in the liver.

The protein resides in the mitochondrion. It catalyses the reaction L-saccharopine + NADP(+) + H2O = L-lysine + 2-oxoglutarate + NADPH + H(+). The enzyme catalyses L-saccharopine + NAD(+) + H2O = (S)-2-amino-6-oxohexanoate + L-glutamate + NADH + H(+). It functions in the pathway amino-acid degradation; L-lysine degradation via saccharopine pathway; glutaryl-CoA from L-lysine: step 1/6. Its pathway is amino-acid degradation; L-lysine degradation via saccharopine pathway; glutaryl-CoA from L-lysine: step 2/6. Functionally, bifunctional enzyme that catalyzes the first two steps in lysine degradation. The protein is Alpha-aminoadipic semialdehyde synthase, mitochondrial of Homo sapiens (Human).